Reading from the N-terminus, the 665-residue chain is Mitochondrial Rho GTPase 1 (665 aa).

Topologically, residues 1-634 (MTNDVIRIVV…NQDPEEETNT (634 aa)) are cytoplasmic. Residues 3–177 (NDVIRIVVCG…FYLCQKAVMH (175 aa)) form the Miro 1 domain. GTP contacts are provided by residues 12-19 (GDEGVGKS), 61-67 (DTQFSNS), and 119-122 (NVFD). EF-hand domains lie at 193–228 (NAVA…CFGR) and 313–348 (EGYR…TPGI). Ca(2+) contacts are provided by Asp-206, Asp-208, Asp-210, Tyr-212, Glu-217, Asp-326, Asp-328, Asp-330, and Glu-337. One can recognise a Miro 2 domain in the interval 452–618 (RSVFNCFVLG…FIQLAEAAQQ (167 aa)). Residues 461 to 468 (GSHMSGKT), 498 to 502 (EMTGG), and 567 to 570 (LKAD) each bind GTP. A helical; Anchor for type IV membrane protein transmembrane segment spans residues 635–655 (IMPFALAGGATVLLAAAVAWI). Over 656-665 (FKNVRVAGRE) the chain is Mitochondrial intermembrane.

Belongs to the mitochondrial Rho GTPase family.

It localises to the mitochondrion outer membrane. Functionally, mitochondrial GTPase involved in mitochondrial trafficking. Probably involved in control of anterograde transport of mitochondria and their subcellular distribution. The polypeptide is Mitochondrial Rho GTPase 1 (GEM1) (Yarrowia lipolytica (strain CLIB 122 / E 150) (Yeast)).